A 538-amino-acid polypeptide reads, in one-letter code: MSLISPLAAVLSAMAIVLGLLFFPNMTPQPTLHPRVGWRKEKASTLRAALRSCYKLNDWALEGYNAYAKLNIPYVLPSFDRGPITIIPARLMRRLYTLPDTDLDIRMTQQETNQTRWVAWDKKPAEDTFVWDVLRKQITRNLRQLTPIVASEIELSFNRWWGTDKEWKSIDIWDSCWKIVTGGINTTLCGSPLCRDAEFLQSCQNHSLVLVAGAMAINGAPRLLQPIIGGLVWFVCAILFNTTMKRSKAVVQERLEKTAMLRAEPAYDWKPPQDAIQWIIDDLYASDNLTQLNVKTICFRLLLLNDVSIPSTSFSVQTLLLNLFAADPALGFLEALREECQTVYTESGGVWTYDALKKLKITESAIRESLRLSPVGGIGLHRTVVNPKGISLPDYRLNLPHGTVIASPIESIHYDDDIYPHANDYNAFRFADPEAVRAILDKLSSEPNSNISTGGPRDRESKSAASTANIDEAFLAFGIGKHICPGRFFVMVEMKLILAIILVHYDVKPVKFKPKLVDCLWLKVPWNSGTLVVRRRSN.

Residues 3-23 (LISPLAAVLSAMAIVLGLLFF) traverse the membrane as a helical segment. Cys484 lines the heme pocket.

Belongs to the cytochrome P450 family. It depends on heme as a cofactor.

It localises to the membrane. The catalysed reaction is 12-deshydroxyl okaramine E + 2 reduced [NADPH--hemoprotein reductase] + 2 O2 = 3-desmethyl okaramine B + 2 oxidized [NADPH--hemoprotein reductase] + 2 H2O + 2 H(+). The protein operates within alkaloid biosynthesis. Nonribosomal peptide synthetase; part of the gene cluster that mediates the biosynthesis of okaramine B, a prenylated indole alkaloid that possesses an unusual octacyclic ring system, including a four-membered azetidine ring and an eight-membered azocine ring, and that exhibits insecticidal activity against silkworm larvae. Within the pathway, okaG acts as a 2,3-diol synthase that installs 2,3-diol on the okaramine scaffold to convert 12-deshydroxyl okaramine E into 3-desmethyl okaramine B. OkaG is also able to produce use okaramine E and produce okaramine D with the help of the methyltransferase okaF. The biosynthesis begins with the NRPS okaA that condenses two tryptophan molecules into cyclo(L-Trp-L-Trp). Prenylation by the prenyltransferase okaC then leads to the formation of cyclo(N8-(alpha,alpha-dimethylallyl)-L-Trp-6a-(alpha,alpha-dime-thylallyl)-L-Trp). This is followed by indole 2,3-epoxidation by the FAD-dependent monooxygenase okaB to facilitate the formation of the hexahydropyrrolo[2,3-b]indole (HPI) moiety of okaramine C. The cytochrome P450 monooxygenase okaD then likely catalyzes formation of the eight-membered ring of okaramine A. The dioxygenase okaE further forms the unusual 2-dimethyl-3-methyl-azetidine ring to yield 12-deshydroxyl okaramine E, as well as the hydroxylation of 12-deshydroxyl okaramine E to produce okaramine E. The cytochrome P450 monoxygenase okaG converts 12-deshydroxyl okaramine E into 3-desmethyl okaramine B which is further methylated by the methyltransferase okaF into okaramine B. In a shunt pathway, okaG and okaF together are also able to convert okaramine E into okaramine D. Okaramine H is produced by nonenzymatic conversion from okaramine A. This chain is Cytochrome P450 monooxygenase okaG, found in Penicillium ochrochloron.